We begin with the raw amino-acid sequence, 78 residues long: Large ribosomal subunit protein bL28 (78 aa).

This sequence belongs to the bacterial ribosomal protein bL28 family.

The polypeptide is Large ribosomal subunit protein bL28 (Glaesserella parasuis serovar 5 (strain SH0165) (Haemophilus parasuis)).